Reading from the N-terminus, the 166-residue chain is Bacterial non-heme ferritin (166 aa).

The 144-residue stretch at 2-145 (LSKNLLEALN…THINYLTRIG (144 aa)) folds into the Ferritin-like diiron domain. Fe cation-binding residues include Glu-17, Glu-50, His-53, Glu-94, and Gln-127.

It belongs to the ferritin family. Prokaryotic subfamily.

Its subcellular location is the cytoplasm. The catalysed reaction is 4 Fe(2+) + O2 + 6 H2O = 4 iron(III) oxide-hydroxide + 12 H(+). Functionally, iron-storage protein. The chain is Bacterial non-heme ferritin (ftnA) from Staphylococcus aureus (strain MRSA252).